The chain runs to 215 residues: Imidazole glycerol phosphate synthase subunit HisH (215 aa).

In terms of domain architecture, Glutamine amidotransferase type-1 spans 9–215; it reads EVVLVDYGLG…QNFVDYCLER (207 aa). The active-site Nucleophile is C85. Active-site residues include H193 and E195.

In terms of assembly, heterodimer of HisH and HisF.

It is found in the cytoplasm. The enzyme catalyses 5-[(5-phospho-1-deoxy-D-ribulos-1-ylimino)methylamino]-1-(5-phospho-beta-D-ribosyl)imidazole-4-carboxamide + L-glutamine = D-erythro-1-(imidazol-4-yl)glycerol 3-phosphate + 5-amino-1-(5-phospho-beta-D-ribosyl)imidazole-4-carboxamide + L-glutamate + H(+). It catalyses the reaction L-glutamine + H2O = L-glutamate + NH4(+). The protein operates within amino-acid biosynthesis; L-histidine biosynthesis; L-histidine from 5-phospho-alpha-D-ribose 1-diphosphate: step 5/9. Its function is as follows. IGPS catalyzes the conversion of PRFAR and glutamine to IGP, AICAR and glutamate. The HisH subunit catalyzes the hydrolysis of glutamine to glutamate and ammonia as part of the synthesis of IGP and AICAR. The resulting ammonia molecule is channeled to the active site of HisF. In Natronomonas pharaonis (strain ATCC 35678 / DSM 2160 / CIP 103997 / JCM 8858 / NBRC 14720 / NCIMB 2260 / Gabara) (Halobacterium pharaonis), this protein is Imidazole glycerol phosphate synthase subunit HisH.